Consider the following 169-residue polypeptide: MFVAIGSTNKAKVEAVKEALKIIGLNADVISVNVESGVSSQPFCHETFVGAKNRAYNALNATNADIGIGIEGGICYYENKYLAFAVVYAANKEGLENFSFSMAFSLPYSMVKHILEGRELGEATDLIFSTKDSKQHEGAIGYLTKVITRKELYIQPVIAALYPFYNKIE.

7 to 12 (STNKAK) contacts substrate. Residue Glu35 coordinates Mg(2+).

It belongs to the YjjX NTPase family. In terms of assembly, homodimer. It depends on Mg(2+) as a cofactor. Mn(2+) serves as cofactor.

The catalysed reaction is XTP + H2O = XDP + phosphate + H(+). The enzyme catalyses ITP + H2O = IDP + phosphate + H(+). In terms of biological role, phosphatase that hydrolyzes non-canonical purine nucleotides such as XTP and ITP to their respective diphosphate derivatives. Probably excludes non-canonical purines from DNA/RNA precursor pool, thus preventing their incorporation into DNA/RNA and avoiding chromosomal lesions. This is Probable inosine/xanthosine triphosphatase from Sulfurisphaera tokodaii (strain DSM 16993 / JCM 10545 / NBRC 100140 / 7) (Sulfolobus tokodaii).